Here is a 338-residue protein sequence, read N- to C-terminus: NADPH dehydrogenase (338 aa).

22–25 is a binding site for FMN; it reads SPMC. Tyr27 is a substrate binding site. 2 residues coordinate FMN: Ala59 and Gln101. Substrate is bound at residue 163–166; that stretch reads HAAH. FMN contacts are provided by residues Arg214 and 306–307; that span reads GR.

Belongs to the NADH:flavin oxidoreductase/NADH oxidase family. NamA subfamily. Homotetramer. Requires FMN as cofactor.

It carries out the reaction A + NADPH + H(+) = AH2 + NADP(+). Its function is as follows. Catalyzes the reduction of the double bond of an array of alpha,beta-unsaturated aldehydes and ketones. It also reduces the nitro group of nitroester and nitroaromatic compounds. It could have a role in detoxification processes. This Listeria monocytogenes serotype 4b (strain CLIP80459) protein is NADPH dehydrogenase.